The chain runs to 222 residues: Deoxyribose-phosphate aldolase (222 aa).

Aspartate 90 (proton donor/acceptor) is an active-site residue. The Schiff-base intermediate with acetaldehyde role is filled by lysine 152. The active-site Proton donor/acceptor is the lysine 181.

Belongs to the DeoC/FbaB aldolase family. DeoC type 1 subfamily.

The protein resides in the cytoplasm. The enzyme catalyses 2-deoxy-D-ribose 5-phosphate = D-glyceraldehyde 3-phosphate + acetaldehyde. Its pathway is carbohydrate degradation; 2-deoxy-D-ribose 1-phosphate degradation; D-glyceraldehyde 3-phosphate and acetaldehyde from 2-deoxy-alpha-D-ribose 1-phosphate: step 2/2. In terms of biological role, catalyzes a reversible aldol reaction between acetaldehyde and D-glyceraldehyde 3-phosphate to generate 2-deoxy-D-ribose 5-phosphate. This chain is Deoxyribose-phosphate aldolase, found in Pectobacterium atrosepticum (strain SCRI 1043 / ATCC BAA-672) (Erwinia carotovora subsp. atroseptica).